The primary structure comprises 380 residues: MVDAIQVAELRRFVEQLKLNPSILHDPSLVFFKEYLRSLGAQVPKIEKTERDYEDKAETKPSFSPKHDDDDDDIMESDVELDNSDVVEPDNEPPQPMGDPTAEVTDENRDDAQSEKSKAMEAISDGRFDEAIEHLTKAVMLNPTSAILYATRASVFLKVKKPNAAIRDANVALQFNSDSAKGYKSRGMAKAMLGQWEEAAADLHVASKLDYDEEIGTMLKKVEPNAKRIEEHRRKYQRLRKEKELQRAERERRKQQEAQEREAQAALNDGEVISIHSTSELEAKTKAAKKASRLLILYFTATWCGPCRYMSPLYSNLATQHSRVVFLKVDIDKANDVAASWNISSVPTFCFIRDGKEVDKVVGADKGSLEQKIAQHSSSK.

The residue at position 2 (Val2) is an N-acetylvaline. Residues 49–59 (TERDYEDKAET) show a composition bias toward basic and acidic residues. The interval 49–115 (TERDYEDKAE…DENRDDAQSE (67 aa)) is disordered. A compositionally biased stretch (acidic residues) spans 69-91 (DDDDDIMESDVELDNSDVVEPDN). Residues 106-115 (DENRDDAQSE) are compositionally biased toward basic and acidic residues. TPR repeat units follow at residues 112-145 (AQSE…NPTS), 147-179 (ILYA…NSDS), and 181-213 (KGYK…DYDE). Positions 240–263 (RKEKELQRAERERRKQQEAQEREA) are enriched in basic and acidic residues. The segment at 240-265 (RKEKELQRAERERRKQQEAQEREAQA) is disordered. Positions 252–378 (RRKQQEAQER…LEQKIAQHSS (127 aa)) constitute a Thioredoxin domain. Residues Cys304 and Cys307 each act as nucleophile in the active site. A disulfide bond links Cys304 and Cys307.

Belongs to the thioredoxin family. Oligomerization under high temperature.

Its function is as follows. Thiol-disulfide oxidoreductase that possesses insulin disulfide bonds reducing activity, disulfide reductase, foldase chaperone and holdase chaperone activities. Heat shock causes oligomerization and formation of high molecular weiht (HMW) complexes with concomitant functional switching from a disulfide reductase and foldase chaperone to a holdase chaperone. May interact with HSP70 proteins through the TPR repeats. The protein is TPR repeat-containing thioredoxin TDX (TDX) of Arabidopsis thaliana (Mouse-ear cress).